The sequence spans 276 residues: Aldo-keto reductase Mkms_1985 (276 aa).

Catalysis depends on Y50, which acts as the Proton donor. NADPH is bound by residues L190, I228, K230, S231, V232, R236, S239, and N240. Residues 257-276 (SSLEDGSRLGPDPKTFNFTG) are disordered.

This sequence belongs to the aldo/keto reductase family.

This chain is Aldo-keto reductase Mkms_1985, found in Mycobacterium sp. (strain KMS).